The chain runs to 372 residues: MPNQHMLMLFNMLPVGSNISTWWNFGSMLLTCSALQTITGFFLAIHYTANINLAFSSVIHITRDVPYGWIMQNLHAIGASMFFICIYIHIARGLYYGSYLNKNVWLSGTILLFILMATAFFGYVLPWGQMSFWAATVITNLLTAVPYIGTTLTNWLWGGFSINDPTLTRFFALHFILPFTIISLSSIHIMLLHTEGSSNPLGTNSDIDKIPFHPYHTHKDILVLTIMLTTMFIIMTLTPNIFNYPENFSKANPLVTPQHIKPEWYFLFAYGILRSIPNKLGGTVALVLSVAILLTTPFTHTSHMRSMTFRPLTQLMFWTLVATFITITWAATKPVEPPFTMIGQMTSLLYFSFFIMNPLLGWLENKISFTNT.

4 helical membrane-spanning segments follow: residues Phe25–Ile45, Trp69–Ile90, Trp105–Leu125, and Phe170–Met190. Heme b is bound by residues His75 and His89. His174 and His188 together coordinate heme b. His193 contacts a ubiquinone. 4 helical membrane-spanning segments follow: residues His218–Thr238, Leu280–His300, Leu312–Thr332, and Phe339–Pro358.

It belongs to the cytochrome b family. The cytochrome bc1 complex contains 3 respiratory subunits (MT-CYB, CYC1 and UQCRFS1), 2 core proteins (UQCRC1 and UQCRC2) and probably 6 low-molecular weight proteins. Heme b is required as a cofactor.

It is found in the mitochondrion inner membrane. Its function is as follows. Component of the ubiquinol-cytochrome c reductase complex (complex III or cytochrome b-c1 complex) that is part of the mitochondrial respiratory chain. The b-c1 complex mediates electron transfer from ubiquinol to cytochrome c. Contributes to the generation of a proton gradient across the mitochondrial membrane that is then used for ATP synthesis. This Lycodon semicarinatus (Ryukyu odd-tooth snake) protein is Cytochrome b (MT-CYB).